Reading from the N-terminus, the 233-residue chain is Large ribosomal subunit protein uL1 (233 aa).

This sequence belongs to the universal ribosomal protein uL1 family. In terms of assembly, part of the 50S ribosomal subunit.

Its function is as follows. Binds directly to 23S rRNA. The L1 stalk is quite mobile in the ribosome, and is involved in E site tRNA release. In terms of biological role, protein L1 is also a translational repressor protein, it controls the translation of the L11 operon by binding to its mRNA. The sequence is that of Large ribosomal subunit protein uL1 from Vibrio cholerae serotype O1 (strain ATCC 39315 / El Tor Inaba N16961).